The following is a 96-amino-acid chain: Co-chaperonin GroES (96 aa).

The protein belongs to the GroES chaperonin family. Heptamer of 7 subunits arranged in a ring. Interacts with the chaperonin GroEL.

It localises to the cytoplasm. Its function is as follows. Together with the chaperonin GroEL, plays an essential role in assisting protein folding. The GroEL-GroES system forms a nano-cage that allows encapsulation of the non-native substrate proteins and provides a physical environment optimized to promote and accelerate protein folding. GroES binds to the apical surface of the GroEL ring, thereby capping the opening of the GroEL channel. In Polaromonas sp. (strain JS666 / ATCC BAA-500), this protein is Co-chaperonin GroES.